The primary structure comprises 331 residues: Ferredoxin--NADP reductase (331 aa).

The FAD site is built by T14, E33, Q41, Y46, V86, F120, D284, and S327.

Belongs to the ferredoxin--NADP reductase type 2 family. As to quaternary structure, homodimer. FAD serves as cofactor.

The catalysed reaction is 2 reduced [2Fe-2S]-[ferredoxin] + NADP(+) + H(+) = 2 oxidized [2Fe-2S]-[ferredoxin] + NADPH. In Picrophilus torridus (strain ATCC 700027 / DSM 9790 / JCM 10055 / NBRC 100828 / KAW 2/3), this protein is Ferredoxin--NADP reductase.